The sequence spans 187 residues: NADH-quinone oxidoreductase subunit B (187 aa).

Residues cysteine 66, cysteine 67, cysteine 131, and cysteine 161 each coordinate [4Fe-4S] cluster.

It belongs to the complex I 20 kDa subunit family. NDH-1 is composed of 14 different subunits. Subunits NuoB, C, D, E, F, and G constitute the peripheral sector of the complex. The cofactor is [4Fe-4S] cluster.

It localises to the cell inner membrane. It catalyses the reaction a quinone + NADH + 5 H(+)(in) = a quinol + NAD(+) + 4 H(+)(out). In terms of biological role, NDH-1 shuttles electrons from NADH, via FMN and iron-sulfur (Fe-S) centers, to quinones in the respiratory chain. The immediate electron acceptor for the enzyme in this species is believed to be ubiquinone. Couples the redox reaction to proton translocation (for every two electrons transferred, four hydrogen ions are translocated across the cytoplasmic membrane), and thus conserves the redox energy in a proton gradient. The chain is NADH-quinone oxidoreductase subunit B from Methylocella silvestris (strain DSM 15510 / CIP 108128 / LMG 27833 / NCIMB 13906 / BL2).